The chain runs to 122 residues: Large ribosomal subunit protein uL14 (122 aa).

It belongs to the universal ribosomal protein uL14 family. Part of the 50S ribosomal subunit. Forms a cluster with proteins L3 and L19. In the 70S ribosome, L14 and L19 interact and together make contacts with the 16S rRNA in bridges B5 and B8.

In terms of biological role, binds to 23S rRNA. Forms part of two intersubunit bridges in the 70S ribosome. This is Large ribosomal subunit protein uL14 from Pseudomonas fluorescens (strain ATCC BAA-477 / NRRL B-23932 / Pf-5).